A 363-amino-acid chain; its full sequence is 5-formaminoimidazole-4-carboxamide-1-(beta)-D-ribofuranosyl 5'-monophosphate synthetase (363 aa).

5-amino-1-(5-phospho-beta-D-ribosyl)imidazole-4-carboxamide-binding residues include His29 and Ser96. The ATP-grasp domain occupies 118–350 (RDILRWESER…MGRRVAREIR (233 aa)). ATP is bound by residues 148-210 (PEEI…TNFC) and Glu232. Asn260 contacts 5-amino-1-(5-phospho-beta-D-ribosyl)imidazole-4-carboxamide. Positions 299 and 312 each coordinate Mg(2+).

This sequence belongs to the phosphohexose mutase family. Mg(2+) serves as cofactor. Mn(2+) is required as a cofactor.

It carries out the reaction 5-amino-1-(5-phospho-beta-D-ribosyl)imidazole-4-carboxamide + formate + ATP = 5-formamido-1-(5-phospho-D-ribosyl)imidazole-4-carboxamide + ADP + phosphate. It functions in the pathway purine metabolism; IMP biosynthesis via de novo pathway; 5-formamido-1-(5-phospho-D-ribosyl)imidazole-4-carboxamide from 5-amino-1-(5-phospho-D-ribosyl)imidazole-4-carboxamide (formate route): step 1/1. Its function is as follows. Catalyzes the ATP- and formate-dependent formylation of 5-aminoimidazole-4-carboxamide-1-beta-d-ribofuranosyl 5'-monophosphate (AICAR) to 5-formaminoimidazole-4-carboxamide-1-beta-d-ribofuranosyl 5'-monophosphate (FAICAR) in the absence of folates. The polypeptide is 5-formaminoimidazole-4-carboxamide-1-(beta)-D-ribofuranosyl 5'-monophosphate synthetase (Methanothermobacter thermautotrophicus (strain ATCC 29096 / DSM 1053 / JCM 10044 / NBRC 100330 / Delta H) (Methanobacterium thermoautotrophicum)).